Reading from the N-terminus, the 97-residue chain is Large ribosomal subunit protein eL21 (97 aa).

The tract at residues 1–26 (MQKSEGFRSKTRYKLQKHPRQKGMAP) is disordered. Over residues 9-21 (SKTRYKLQKHPRQ) the composition is skewed to basic residues.

The protein belongs to the eukaryotic ribosomal protein eL21 family.

In Methanococcus maripaludis (strain C6 / ATCC BAA-1332), this protein is Large ribosomal subunit protein eL21.